The primary structure comprises 189 residues: GTPase NRas (189 aa).

GTP is bound at residue Gly10–Ser17. The Effector region signature appears at Tyr32–Tyr40. Residues Asp57–Gln61 and Asn116–Asp119 contribute to the GTP site. The segment at Tyr166–Pro185 is hypervariable region. Cys181 is lipidated: S-palmitoyl cysteine. The S-farnesyl cysteine moiety is linked to residue Cys186. Residues Lys187–Met189 constitute a propeptide, removed in mature form.

This sequence belongs to the small GTPase superfamily. Ras family. In terms of processing, palmitoylated by the ZDHHC9-GOLGA7 complex. Depalmitoylated by abhd17a, abhd17b and abhd17c. A continuous cycle of de- and re-palmitoylation regulates rapid exchange between plasma membrane and Golgi.

The protein resides in the cell membrane. Its subcellular location is the golgi apparatus membrane. The catalysed reaction is GTP + H2O = GDP + phosphate + H(+). Its activity is regulated as follows. Alternates between an inactive form bound to GDP and an active form bound to GTP. Activated by a guanine nucleotide-exchange factor (GEF) and inactivated by a GTPase-activating protein (GAP). Functionally, ras proteins bind GDP/GTP and possess intrinsic GTPase activity. In Xenopus laevis (African clawed frog), this protein is GTPase NRas (nras).